A 257-amino-acid polypeptide reads, in one-letter code: Nickel import system ATP-binding protein NikD (257 aa).

Residues 4 to 245 form the ABC transporter domain; sequence IDIQNLTIKN…HLHPYTERLI (242 aa). 37–44 is an ATP binding site; that stretch reads GESGAGKS.

Belongs to the ABC transporter superfamily. The complex is composed of two ATP-binding proteins (NikD and NikE), two transmembrane proteins (NikB and NikC) and a solute-binding protein (NikA).

The protein localises to the cell membrane. It catalyses the reaction Ni(2+)(out) + ATP + H2O = Ni(2+)(in) + ADP + phosphate + H(+). Part of the ABC transporter complex NikABCDE (Opp2) involved in nickel import. Probably responsible for energy coupling to the transport system. This is Nickel import system ATP-binding protein NikD from Staphylococcus aureus (strain Mu50 / ATCC 700699).